A 423-amino-acid polypeptide reads, in one-letter code: Transcription factor IIIB 50 kDa subunit (423 aa).

A TFIIB-type zinc finger spans residues 1-34 (MSKNCPECGSSRVVEDDLYSQKQWVCEDCGSVVS). The Zn(2+) site is built by C5, C8, C26, and C29. The stretch at 171-245 (LESFCYDFKL…LARMKYSLMK (75 aa)) is repeat 2. Residues 325-340 (QTSQYSESELSDSKSS) are compositionally biased toward low complexity. Residues 325–358 (QTSQYSESELSDSKSSVQTQCKSPPDEEDEGCEL) form a disordered region. C373 is modified (cysteine sulfenic acid (-SOH)).

The protein belongs to the TFIIB family. In terms of assembly, component of TFIIIB complexes. Interacts with TBP and forms a ternary complex with TBp and target DNA sequences. Post-translationally, in response to oxidative stress, a Cys-residue is reversibly oxidized to cysteine sulfenic acid. This impairs formation of a ternary complex with TBP and DNA and down-regulates expression of target genes in response to oxidative stress.

Its subcellular location is the nucleus. General activator of RNA polymerase III transcription. Factor exclusively required for RNA polymerase III transcription of genes with promoter elements upstream of the initiation sites. Contributes to the regulation of gene expression; functions as activator in the absence of oxidative stress. Down-regulates expression of target genes in response to oxidative stress. Overexpression protects cells against apoptosis in response to oxidative stress. The polypeptide is Transcription factor IIIB 50 kDa subunit (brf2) (Danio rerio (Zebrafish)).